We begin with the raw amino-acid sequence, 177 residues long: Peptide methionine sulfoxide reductase MsrA 2 (177 aa).

C12 is a catalytic residue.

This sequence belongs to the MsrA Met sulfoxide reductase family.

The catalysed reaction is L-methionyl-[protein] + [thioredoxin]-disulfide + H2O = L-methionyl-(S)-S-oxide-[protein] + [thioredoxin]-dithiol. The enzyme catalyses [thioredoxin]-disulfide + L-methionine + H2O = L-methionine (S)-S-oxide + [thioredoxin]-dithiol. Has an important function as a repair enzyme for proteins that have been inactivated by oxidation. Catalyzes the reversible oxidation-reduction of methionine sulfoxide in proteins to methionine. The polypeptide is Peptide methionine sulfoxide reductase MsrA 2 (msrA2) (Staphylococcus aureus (strain Mu50 / ATCC 700699)).